Consider the following 448-residue polypeptide: UDP-N-acetylmuramoylalanine--D-glutamate ligase (448 aa).

UDP-N-acetyl-alpha-D-muramoyl-L-alanine contacts are provided by K17, S18, T38, R39, and G78. 116–122 contributes to the ATP binding site; the sequence is GSNAKST. Residues A119, K120, S121, and T122 each coordinate ADP. N143 and H188 together coordinate UDP-N-acetyl-alpha-D-muramoyl-L-alanine. The ADP site is built by N278, R309, D324, and K326.

Belongs to the MurCDEF family.

The protein resides in the cytoplasm. The enzyme catalyses UDP-N-acetyl-alpha-D-muramoyl-L-alanine + D-glutamate + ATP = UDP-N-acetyl-alpha-D-muramoyl-L-alanyl-D-glutamate + ADP + phosphate + H(+). It functions in the pathway cell wall biogenesis; peptidoglycan biosynthesis. Involved in cell wall formation. Catalyzes the addition of D-glutamate to the peptidoglycan precursor UDP-N-acetylmuramoyl-L-alanine (UMA). The protein is UDP-N-acetylmuramoylalanine--D-glutamate ligase of Pseudomonas aeruginosa (strain ATCC 15692 / DSM 22644 / CIP 104116 / JCM 14847 / LMG 12228 / 1C / PRS 101 / PAO1).